Here is a 542-residue protein sequence, read N- to C-terminus: Chaperonin GroEL 2 (542 aa).

ATP-binding positions include 30–33, Lys51, 87–91, Gly415, and Asp496; these read TLGP and DGTTT.

The protein belongs to the chaperonin (HSP60) family. In terms of assembly, forms a cylinder of 14 subunits composed of two heptameric rings stacked back-to-back. Interacts with the co-chaperonin GroES.

The protein resides in the cytoplasm. The catalysed reaction is ATP + H2O + a folded polypeptide = ADP + phosphate + an unfolded polypeptide.. In terms of biological role, together with its co-chaperonin GroES, plays an essential role in assisting protein folding. The GroEL-GroES system forms a nano-cage that allows encapsulation of the non-native substrate proteins and provides a physical environment optimized to promote and accelerate protein folding. This Cereibacter sphaeroides (strain ATCC 17023 / DSM 158 / JCM 6121 / CCUG 31486 / LMG 2827 / NBRC 12203 / NCIMB 8253 / ATH 2.4.1.) (Rhodobacter sphaeroides) protein is Chaperonin GroEL 2.